Here is a 507-residue protein sequence, read N- to C-terminus: ATP synthase subunit alpha, chloroplastic (507 aa).

170-177 (GDRQTGKT) contributes to the ATP binding site.

The protein belongs to the ATPase alpha/beta chains family. As to quaternary structure, F-type ATPases have 2 components, CF(1) - the catalytic core - and CF(0) - the membrane proton channel. CF(1) has five subunits: alpha(3), beta(3), gamma(1), delta(1), epsilon(1). CF(0) has four main subunits: a, b, b' and c.

It localises to the plastid. It is found in the chloroplast thylakoid membrane. The enzyme catalyses ATP + H2O + 4 H(+)(in) = ADP + phosphate + 5 H(+)(out). Produces ATP from ADP in the presence of a proton gradient across the membrane. The alpha chain is a regulatory subunit. The sequence is that of ATP synthase subunit alpha, chloroplastic from Manihot esculenta (Cassava).